A 192-amino-acid polypeptide reads, in one-letter code: uncharacterized protein (192 aa).

This is an uncharacterized protein from Acanthamoeba polyphaga mimivirus (APMV).